We begin with the raw amino-acid sequence, 31 residues long: Cliotide T14 (31 aa).

A cross-link (cyclopeptide (Asp-Asn)) is located at residues 1–31 (DTIPCGESCVWIPCISSILGCSCKDKVCYHN). Intrachain disulfides connect cysteine 5-cysteine 21, cysteine 9-cysteine 23, and cysteine 14-cysteine 28.

Contains 3 disulfide bonds. Post-translationally, this is a cyclic peptide. Expressed in seed but not in root nodules.

Probably participates in a plant defense mechanism. Not active against Gram-negative bacterium E.coli ATCC 700926 or Gram-positive bacterium S.aureus ATCC 12600 up to a concentration of 100 uM under low-salt conditions. The chain is Cliotide T14 from Clitoria ternatea (Butterfly pea).